The following is a 313-amino-acid chain: Ribosomal protein L11 methyltransferase (313 aa).

S-adenosyl-L-methionine is bound by residues Thr-151, Gly-172, Asp-194, and Asn-245.

Belongs to the methyltransferase superfamily. PrmA family.

It localises to the cytoplasm. The catalysed reaction is L-lysyl-[protein] + 3 S-adenosyl-L-methionine = N(6),N(6),N(6)-trimethyl-L-lysyl-[protein] + 3 S-adenosyl-L-homocysteine + 3 H(+). Methylates ribosomal protein L11. This is Ribosomal protein L11 methyltransferase from Nitrosomonas europaea (strain ATCC 19718 / CIP 103999 / KCTC 2705 / NBRC 14298).